The sequence spans 317 residues: Nitrilase (317 aa).

The 276-residue stretch at valine 5–methionine 280 folds into the CN hydrolase domain. Residue glutamate 45 is the Proton acceptor of the active site. Residue lysine 125 is part of the active site. Residue cysteine 165 is the Nucleophile of the active site.

It belongs to the carbon-nitrogen hydrolase superfamily. Nitrilase family.

It carries out the reaction a nitrile + 2 H2O = a carboxylate + NH4(+). In terms of biological role, nitrilase that hydrolyzes preferentially 4-cyanopyridine. Is also able to hydrolyze some aliphatic nitriles, such as phenylacetonitrile. This is Nitrilase from Meyerozyma guilliermondii (strain ATCC 6260 / CBS 566 / DSM 6381 / JCM 1539 / NBRC 10279 / NRRL Y-324) (Yeast).